Reading from the N-terminus, the 176-residue chain is MQFLNTFSKSRISWLLLLLCIVFFEGSALFFQHGMKLGPCVMCIYERVAMMGIAFAALLGAIAPQYAIIRWAGLIAWGYSAVRGLQLSIEHVGYQFNPSPFATCDLFVQFPNWAPLNKWVPWMFEAYGNCAEVVWTFLGQSMPQWLVIIFAGNLVALALIVIAQFFSKKTNTILDM.

The Cytoplasmic portion of the chain corresponds to 1-13; that stretch reads MQFLNTFSKSRIS. The chain crosses the membrane as a helical span at residues 14–30; it reads WLLLLLCIVFFEGSALF. At 31–48 the chain is on the periplasmic side; it reads FQHGMKLGPCVMCIYERV. C40 and C43 are joined by a disulfide. A helical transmembrane segment spans residues 49 to 64; sequence AMMGIAFAALLGAIAP. Over 65-71 the chain is Cytoplasmic; the sequence is QYAIIRW. Residues 72–89 traverse the membrane as a helical segment; the sequence is AGLIAWGYSAVRGLQLSI. Topologically, residues 90-144 are periplasmic; sequence EHVGYQFNPSPFATCDLFVQFPNWAPLNKWVPWMFEAYGNCAEVVWTFLGQSMPQ. A disulfide bridge links C104 with C130. A helical transmembrane segment spans residues 145 to 163; the sequence is WLVIIFAGNLVALALIVIA. Residues 164-176 lie on the Cytoplasmic side of the membrane; the sequence is QFFSKKTNTILDM.

Belongs to the DsbB family.

Its subcellular location is the cell inner membrane. Required for disulfide bond formation in some periplasmic proteins. Acts by oxidizing the DsbA protein. The sequence is that of Disulfide bond formation protein B from Photobacterium profundum (strain SS9).